The following is a 644-amino-acid chain: Neurofilament medium polypeptide (644 aa).

The tract at residues 1 to 33 (VKVELDKKVQSLQDEVAFLRTNHEEEVADLLAQ) is coil 1B. Residues 1–197 (VKVELDKKVQ…KLLEGEETRF (197 aa)) enclose the IF rod domain. Serine 11 is modified (phosphoserine). A linker 12 region spans residues 34–50 (IQASHITVERKDYLKTD). Residues 51-72 (ISSALKEIRSQLECHSDQNMHQ) form a coil 2A region. A linker 2 region spans residues 73 to 76 (AEEW). Residues 77–197 (FKCRYAKLTE…KLLEGEETRF (121 aa)) are coil 2B. Tyrosine 105 is subject to Phosphotyrosine. Phosphoserine is present on residues serine 131, serine 203, and serine 215. Positions 198-643 (STFSGSITGP…HAIVKEVTQS (446 aa)) are tail. Residue threonine 217 is glycosylated (O-linked (GlcNAc) threonine). Phosphoserine is present on residues serine 253 and serine 269. Residues 270 to 582 (VKEEEKEEEA…GGDRSEEKVV (313 aa)) are disordered. Acidic residues predominate over residues 274–292 (EKEEEAEGKEEEQEAEEEV). The residue at position 298 (serine 298) is a Phosphoserine. Positions 308–328 (KEEEGEKEEEGQEEEEEEEDE) are enriched in acidic residues. Over residues 329 to 350 (GVKSDQAEEGGSEKEGSSKNEG) the composition is skewed to basic and acidic residues. Serine 332, serine 340, serine 345, and serine 346 each carry phosphoserine. Residues 351 to 368 (EQEEGETEAEGEVEEAEA) show a composition bias toward acidic residues. The residue at position 357 (threonine 357) is a Phosphothreonine. Positions 369–400 (KEEKKTEEKSEEVAAKEEPVTEAKVGKPEKAK) are enriched in basic and acidic residues. Serine 401, serine 406, serine 442, and serine 465 each carry phosphoserine. The span at 422–470 (GEQKEEEEKVEEEKKKAAKESPKEEKVEKKEEKPKDVPKKKAESPVKEE) shows a compositional bias: basic and acidic residues. The span at 474 to 483 (EAATITKPTK) shows a compositional bias: low complexity. Residues 485-508 (GLEKETKEGEKPLQQEKEKEKAGE) are compositionally biased toward basic and acidic residues. Phosphoserine is present on residues serine 512, serine 550, and serine 566. Over residues 545 to 557 (TKEKGSGREEEKG) the composition is skewed to basic and acidic residues. Basic and acidic residues predominate over residues 568-582 (ADEKKGGDRSEEKVV).

The protein belongs to the intermediate filament family. Forms heterodimers with NEFL; which can further hetero-oligomerize (in vitro). Forms heterodimers with INA (in vitro). Post-translationally, there are a number of repeats of the tripeptide K-S-P, NFM is phosphorylated on a number of the serines in this motif. It is thought that phosphorylation of NFM results in the formation of interfilament cross bridges that are important in the maintenance of axonal caliber. Phosphorylation seems to play a major role in the functioning of the larger neurofilament polypeptides (NF-M and NF-H), the levels of phosphorylation being altered developmentally and coincidentally with a change in the neurofilament function. In terms of processing, phosphorylated in the head and rod regions by the PKC kinase PKN1, leading to the inhibition of polymerization.

It localises to the cytoplasm. The protein localises to the cytoskeleton. The protein resides in the cell projection. It is found in the axon. In terms of biological role, neurofilaments usually contain three intermediate filament proteins: NEFL, NEFM, and NEFH which are involved in the maintenance of neuronal caliber. May additionally cooperate with the neuronal intermediate filament proteins PRPH and INA to form neuronal filamentous networks. This chain is Neurofilament medium polypeptide (NEFM), found in Oryctolagus cuniculus (Rabbit).